We begin with the raw amino-acid sequence, 748 residues long: Translation factor GUF1 homolog 2, mitochondrial (748 aa).

Residues 1-29 (MRVGCCLLLKPLRQRLCTASISSRHIMRW) constitute a mitochondrion transit peptide. A tr-type G domain is found at 94-276 (SHIRNVAVVA…AIIERVPPPT (183 aa)). GTP-binding positions include 103 to 110 (AHVDHGKT), 167 to 171 (DTPGH), and 221 to 224 (TKMD).

It belongs to the TRAFAC class translation factor GTPase superfamily. Classic translation factor GTPase family. LepA subfamily.

The protein localises to the mitochondrion inner membrane. The catalysed reaction is GTP + H2O = GDP + phosphate + H(+). Promotes mitochondrial protein synthesis. May act as a fidelity factor of the translation reaction, by catalyzing a one-codon backward translocation of tRNAs on improperly translocated ribosomes. Binds to mitochondrial ribosomes in a GTP-dependent manner. In Trypanosoma cruzi (strain CL Brener), this protein is Translation factor GUF1 homolog 2, mitochondrial.